Reading from the N-terminus, the 242-residue chain is Ras-like protein family member 11A (242 aa).

Positions 17-241 are small GTPase-like; that stretch reads ESSSDYLLPK…SPKVKAPSAL (225 aa). GTP is bound by residues 34-41, 81-85, and 147-150; these read GAGRVGKS, DTPGG, and NKGD.

Belongs to the small GTPase superfamily. Ras family. Interacts with UBF/UBTF. In terms of tissue distribution, widely expressed. Down-regulated in prostate tumors compared to normal prostate tissue. High levels found in colon tumor and normal colon tissue followed by small intestine, liver, jejunum, ileum, bladder and aorta. Lowest levels observed in endothelial cells.

The protein resides in the nucleus. The protein localises to the nucleolus. The catalysed reaction is GTP + H2O = GDP + phosphate + H(+). Regulator of rDNA transcription. Acts in cooperation UBF/UBTF and positively regulates RNA polymerase I transcription. The polypeptide is Ras-like protein family member 11A (Homo sapiens (Human)).